The sequence spans 495 residues: Probable cobyric acid synthase (495 aa).

Residues 256–441 (DVDIAVIRLT…LHGLFDNVNI (186 aa)) enclose the GATase cobBQ-type domain. The active-site Nucleophile is C334. H433 is a catalytic residue.

This sequence belongs to the CobB/CobQ family. CobQ subfamily.

It participates in cofactor biosynthesis; adenosylcobalamin biosynthesis. Functionally, catalyzes amidations at positions B, D, E, and G on adenosylcobyrinic A,C-diamide. NH(2) groups are provided by glutamine, and one molecule of ATP is hydrogenolyzed for each amidation. The protein is Probable cobyric acid synthase of Methanococcoides burtonii (strain DSM 6242 / NBRC 107633 / OCM 468 / ACE-M).